Here is a 261-residue protein sequence, read N- to C-terminus: Sepiapterin reductase (261 aa).

At Met-1 the chain carries N-acetylmethionine. 15 to 21 (GASRGFG) contacts NADP(+). A Phosphoserine modification is found at Ser-33. 43–44 (RS) is an NADP(+) binding site. Residue Ser-46 is modified to Phosphoserine. 70–71 (DL) provides a ligand contact to NADP(+). Substrate is bound by residues 158–159 (SL) and Tyr-171. Lys-175 contributes to the NADP(+) binding site. Ser-196 bears the Phosphoserine mark. Gly-200 contacts substrate. 202–207 (LDNDMQ) provides a ligand contact to NADP(+). Position 214 is a phosphoserine (Ser-214). Substrate contacts are provided by Lys-222 and Asp-258.

It belongs to the sepiapterin reductase family. Homodimer.

The protein resides in the cytoplasm. The catalysed reaction is L-erythro-7,8-dihydrobiopterin + NADP(+) = L-sepiapterin + NADPH + H(+). It catalyses the reaction (6R)-L-erythro-5,6,7,8-tetrahydrobiopterin + 2 NADP(+) = 6-pyruvoyl-5,6,7,8-tetrahydropterin + 2 NADPH + 2 H(+). Catalyzes the final one or two reductions in tetra-hydrobiopterin biosynthesis to form 5,6,7,8-tetrahydrobiopterin. This Mus musculus (Mouse) protein is Sepiapterin reductase (Spr).